Here is a 236-residue protein sequence, read N- to C-terminus: ATP synthase subunit a (236 aa).

The next 5 membrane-spanning stretches (helical) occupy residues 18-38 (SNLL…VLCT), 80-100 (VTLL…AIVI), 112-132 (DPAI…YYGI), 179-199 (ILLS…IGAA), and 200-220 (IPML…AFIF).

The protein belongs to the ATPase A chain family. In terms of assembly, F-type ATPases have 2 components, CF(1) - the catalytic core - and CF(0) - the membrane proton channel. CF(1) has five subunits: alpha(3), beta(3), gamma(1), delta(1), epsilon(1). CF(0) has three main subunits: a(1), b(2) and c(9-12). The alpha and beta chains form an alternating ring which encloses part of the gamma chain. CF(1) is attached to CF(0) by a central stalk formed by the gamma and epsilon chains, while a peripheral stalk is formed by the delta and b chains.

It localises to the cell membrane. Functionally, key component of the proton channel; it plays a direct role in the translocation of protons across the membrane. The sequence is that of ATP synthase subunit a from Priestia megaterium (strain ATCC 12872 / QMB1551) (Bacillus megaterium).